The primary structure comprises 481 residues: Coniferyl aldehyde dehydrogenase (481 aa).

Residues Glu221 and Cys255 contribute to the active site.

This sequence belongs to the aldehyde dehydrogenase family. As to quaternary structure, homodimer.

It carries out the reaction (E)-coniferaldehyde + NADP(+) + H2O = (E)-ferulate + NADPH + 2 H(+). The catalysed reaction is (E)-coniferaldehyde + NAD(+) + H2O = (E)-ferulate + NADH + 2 H(+). Catalyzes the NAD(+)-dependent oxidation of coniferyl aldehyde to ferulic acid and which is induced during growth with eugenol as the carbon source. This Pseudomonas sp. (strain HR199 / DSM 7063) protein is Coniferyl aldehyde dehydrogenase (calB).